The chain runs to 1023 residues: Peroxisome proliferator-activated receptor gamma coactivator 1-beta (1023 aa).

Positions 1–91 are abolishes DNA transcriptional activity when missing; the sequence is MAGNDCGALL…LFQIDSENEA (91 aa). Residues 122–148 are disordered; sequence LSCTSASPAPSSAPPSPAPEKPSAPAP. The segment covering 132 to 146 has biased composition (pro residues); the sequence is SSAPPSPAPEKPSAP. The LXXLL motif 1 signature appears at 156–160; that stretch reads LQKLL. Disordered regions lie at residues 165–210, 237–278, and 302–331; these read YPTS…QSQS, LQSP…PGAP, and RKLPPQTPEPLPKACSNPSQQVRSRPWSRH. An LXXLL motif 2 motif is present at residues 343–347; that stretch reads LRELL. Disordered stretches follow at residues 369 to 463, 520 to 567, 601 to 623, and 636 to 683; these read LTPR…LPWT, RELG…QLPP, TAGLTPPTTPPYKPTEEDPFKPD, and LPSP…GQKR. A Phosphoserine modification is found at Ser-384. Positions 412-422 are enriched in basic and acidic residues; sequence LRLEVKREVRR. The segment covering 429–450 has biased composition (acidic residues); it reads QEEEDEEEEEEEEEEEKEEEEE. Ser-524 bears the Phosphoserine mark. Basic and acidic residues predominate over residues 614 to 623; sequence PTEEDPFKPD. Ser-638 bears the Phosphoserine mark. An HCFC1-binding-motif (HBM) motif is present at residues 691–694; sequence DHDY. Disordered stretches follow at residues 717-758 and 779-867; these read VHLE…LRDH and DLAS…WSPA. Low complexity predominate over residues 793-805; the sequence is EDSSSSSGESSFL. Residues 806–825 are compositionally biased toward acidic residues; that stretch reads PEEEEEEGEEEEEDDEEEDS. Positions 849-866 are enriched in low complexity; that stretch reads CSRSRSSSGSSPCHSWSP. The 75-residue stretch at 902–976 folds into the RRM domain; the sequence is RVVYIQNLSS…RNEPSFQLSY (75 aa).

In terms of assembly, interacts with hepatocyte nuclear factor 4-alpha/HNF4A, Sterol regulatory binding transcription factor 1/SREBF1, PPAR-alpha/PPARA, thyroid hormone receptor beta/THRB and host cell factor/HCFC1. Interacts with estrogen-related receptor gamma/ESRRG and alpha/ESRRA. Interacts with PRDM16. Interacts with estrogen receptor alpha/ESR1. Ubiquitous with higher expression in heart, brain and skeletal muscle.

The protein localises to the nucleus. Functionally, plays a role of stimulator of transcription factors and nuclear receptors activities. Activates transcriptional activity of estrogen receptor alpha, nuclear respiratory factor 1 (NRF1) and glucocorticoid receptor in the presence of glucocorticoids. May play a role in constitutive non-adrenergic-mediated mitochondrial biogenesis as suggested by increased basal oxygen consumption and mitochondrial number when overexpressed. May be involved in fat oxidation and non-oxidative glucose metabolism and in the regulation of energy expenditure. Induces the expression of PERM1 in the skeletal muscle in an ESRRA-dependent manner. In Homo sapiens (Human), this protein is Peroxisome proliferator-activated receptor gamma coactivator 1-beta (PPARGC1B).